The sequence spans 297 residues: Bax inhibitor 1 (297 aa).

Over 1 to 53 the chain is Lumenal; that stretch reads MSGPPPPYEEQSSHLYGQPASSQDGNAFIPEDFKYSTVVISCEPIIRQRFMHK. The chain crosses the membrane as a helical span at residues 54–74; it reads VYSLLSCQLLASLSFCYWASV. Residues 75-85 lie on the Cytoplasmic side of the membrane; sequence STSLQNFIMSH. The chain crosses the membrane as a helical span at residues 86–106; it reads IALFYICMVVSLVSCIWLAVS. Topologically, residues 107 to 146 are lumenal; sequence PRPEDYEASVPEPLLTGSSEEPAQEQRRLPWYVLSSYKQK. Residues 147–167 traverse the membrane as a helical segment; that stretch reads LTLLSIFTLSEAYCLSLVTLA. Over 168–171 the chain is Cytoplasmic; it reads YDKD. The helical transmembrane segment at 172-192 threads the bilayer; that stretch reads TVLSALLITTIVVVGVSLTAL. At 193-208 the chain is on the lumenal side; sequence SERFENVLNSATSIYY. Residues 209–229 form a helical membrane-spanning segment; that stretch reads WLNWGLWIMIGMGLTALLFGW. At 230–239 the chain is on the cytoplasmic side; sequence NTHSSKFNLL. A helical transmembrane segment spans residues 240 to 260; it reads YGWLGAILFTAYLFIDTQLIF. Topologically, residues 261 to 270 are lumenal; sequence RKVYPDEEVR. The helical transmembrane segment at 271–291 threads the bilayer; sequence CAMMLYLDIVNLFLSILRILA. Residues 292 to 297 are Cytoplasmic-facing; that stretch reads NSNDDN.

It belongs to the BI1 family. LFG subfamily.

Its subcellular location is the endoplasmic reticulum membrane. The protein localises to the vacuole membrane. The protein resides in the mitochondrion membrane. Its function is as follows. Links the unfolded protein response and programmed cell death and mediates mitochondrial-dependent apoptosis. Induces cell death and disruption of the mitochondrial transmembrane potential via the mitochondrial phosphate carrier MIR1. Dispensible for starvation-induced autophagy. The polypeptide is Bax inhibitor 1 (BXI1) (Saccharomyces cerevisiae (strain ATCC 204508 / S288c) (Baker's yeast)).